A 401-amino-acid chain; its full sequence is Serine--glyoxylate aminotransferase (401 aa).

M1 bears the N-acetylmethionine mark. Residues 68-70 (TGT), T148, and 200-201 (QK) contribute to the pyridoxal 5'-phosphate site. K201 is a 3-hydroxypyruvate binding site. K201 is subject to N6-(pyridoxal phosphate)lysine. Phosphoserine is present on S204. R347 provides a ligand contact to 3-hydroxypyruvate. Residues 399 to 401 (SRI) carry the Microbody targeting signal motif.

This sequence belongs to the class-V pyridoxal-phosphate-dependent aminotransferase family. In terms of assembly, forms homodimers. Interacts with RABGAP22. Requires pyridoxal 5'-phosphate as cofactor. As to expression, widely expressed. Preferentially expressed in green, leafy tissues, root cortex and epidermis, developing siliques and dry seeds.

The protein resides in the peroxisome. The catalysed reaction is glyoxylate + L-serine = 3-hydroxypyruvate + glycine. It carries out the reaction glyoxylate + L-alanine = glycine + pyruvate. It catalyses the reaction L-serine + pyruvate = 3-hydroxypyruvate + L-alanine. The enzyme catalyses 3-hydroxypyruvate + L-asparagine = 2-oxosuccinamate + L-serine. The catalysed reaction is L-asparagine + glyoxylate = 2-oxosuccinamate + glycine. It carries out the reaction L-asparagine + pyruvate = 2-oxosuccinamate + L-alanine. Inhibited by aminooxyacetate and beta-chloro-L-alanine, but not by p-hydroxymercuribenzoate. Its function is as follows. Photorespiratory enzyme that catalyzes transamination reactions with multiple substrates, including asparagine. Functions exclusively as a catabolic enzyme in Asn metabolism. Involved in root development during seedling establishment after seed germination by regulating serine homeostasis and acetate conversion. In Arabidopsis thaliana (Mouse-ear cress), this protein is Serine--glyoxylate aminotransferase.